Reading from the N-terminus, the 320-residue chain is MQNRNTFSWVKEQMTRSISVSIIIYVITRTSISNAYPIFAQQGYENPREATGRIVCANCHLANKPVDIEVPQAVLPDTVFEAVVKIPYDMQLKQVLANGKKGALNVGALLILPEGFELAPPDRISPEMKEKMGNLSFQSYRPTKRNILVIGPVPGQKYSEIVFPILSPDPATKKDVHFLKYPIYVGGNRGRGQIYPDGSKSNNTVYNARTAGIVSRIVRKEKGGYEITIADASDGHQVVDIIPSGPELLVSEGESIKLDQPLTSNPNVGGFGQGGAEIVLQDPLRVQGLLFFLASIILAQIFLVLKKKQFEKVQLSEMNF.

The N-terminal stretch at 1 to 35 (MQNRNTFSWVKEQMTRSISVSIIIYVITRTSISNA) is a signal peptide. 4 residues coordinate heme: Tyr-36, Cys-56, Cys-59, and His-60. The chain crosses the membrane as a helical span at residues 286–306 (VQGLLFFLASIILAQIFLVLK).

It belongs to the cytochrome f family. The 4 large subunits of the cytochrome b6-f complex are cytochrome b6, subunit IV (17 kDa polypeptide, petD), cytochrome f and the Rieske protein, while the 4 small subunits are PetG, PetL, PetM and PetN. The complex functions as a dimer. Heme serves as cofactor.

It localises to the plastid. It is found in the chloroplast thylakoid membrane. In terms of biological role, component of the cytochrome b6-f complex, which mediates electron transfer between photosystem II (PSII) and photosystem I (PSI), cyclic electron flow around PSI, and state transitions. This is Cytochrome f from Chloranthus spicatus (Chulantree).